Here is a 144-residue protein sequence, read N- to C-terminus: Large ribosomal subunit protein uL16 (144 aa).

This sequence belongs to the universal ribosomal protein uL16 family. Part of the 50S ribosomal subunit.

Its function is as follows. Binds 23S rRNA and is also seen to make contacts with the A and possibly P site tRNAs. The chain is Large ribosomal subunit protein uL16 from Clostridium beijerinckii (strain ATCC 51743 / NCIMB 8052) (Clostridium acetobutylicum).